Consider the following 87-residue polypeptide: MAVKIRLARHGAKKRPFYRIVVTDSESPRDGRFIEIVGTYNPVAEPAQIDLKDERIKHWMESGALPTHTVRNILKNQGFFSEAPQEA.

This sequence belongs to the bacterial ribosomal protein bS16 family.

In Desulfatibacillum aliphaticivorans, this protein is Small ribosomal subunit protein bS16.